The following is a 459-amino-acid chain: Ceramide glucosyltransferase 3 (459 aa).

The helical transmembrane segment at 77–97 (LIAIVGFVFVFCLYLIHIIAL) threads the bilayer. Position 156 (D156) is a short sequence motif, D1. D208 is a short sequence motif (D2). Residue D302 is a short sequence motif, D3. The active-site Proton acceptor is D302. The (Q/R)XXRW signature appears at 338-342 (RICRW). 2 consecutive transmembrane segments (helical) span residues 367-387 (LIMA…ILIL) and 415-435 (FMLI…KALL).

Belongs to the glycosyltransferase 2 family. Expressed in pharyngeal intestinal valve, intestinal rectal valve and hypodermis.

The protein localises to the membrane. The catalysed reaction is an N-acylsphing-4-enine + UDP-alpha-D-glucose = a beta-D-glucosyl-(1&lt;-&gt;1')-N-acylsphing-4-enine + UDP + H(+). It catalyses the reaction an N-acyl-15-methylhexadecasphing-4-enine + UDP-alpha-D-glucose = an N-acyl-1-beta-D-glucosyl-15-methylhexadecasphing-4-enine + UDP + H(+). The protein operates within lipid metabolism; sphingolipid metabolism. Functionally, catalyzes the first glycosylation step in glycosphingolipid biosynthesis, the transfer of glucose to ceramide to produce glucosylceramides (GlcCer). GlcCer are known to contribute to the physical properties and physiological functions of membranes and may regulate signal transduction. Seems to be the major active form in the nematode. Only branched-chain sphingoid bases like 15-methylhexadecasphing-4-enine are used for generating complex sphingolipids in Caenorhabditis elegans. Together with cgt-1, plays a role in the trafficking of proteins such as mig-14 to the cell membrane in intestinal cells. This is Ceramide glucosyltransferase 3 from Caenorhabditis elegans.